A 418-amino-acid polypeptide reads, in one-letter code: Putative competence-damage inducible protein (418 aa).

Belongs to the CinA family.

This Streptococcus pneumoniae (strain JJA) protein is Putative competence-damage inducible protein.